The following is a 163-amino-acid chain: Urease accessory protein UreE (163 aa).

Positions 144–163 are disordered; the sequence is QPEPGAYGGSSAGSHDGHHH.

The protein belongs to the UreE family.

The protein resides in the cytoplasm. In terms of biological role, involved in urease metallocenter assembly. Binds nickel. Probably functions as a nickel donor during metallocenter assembly. The chain is Urease accessory protein UreE from Aliivibrio fischeri (strain ATCC 700601 / ES114) (Vibrio fischeri).